The primary structure comprises 434 residues: Methylenetetrahydrofolate--tRNA-(uracil-5-)-methyltransferase TrmFO (434 aa).

An FAD-binding site is contributed by 9–14; the sequence is GAGLAG.

Belongs to the MnmG family. TrmFO subfamily. FAD is required as a cofactor.

It is found in the cytoplasm. It carries out the reaction uridine(54) in tRNA + (6R)-5,10-methylene-5,6,7,8-tetrahydrofolate + NADH + H(+) = 5-methyluridine(54) in tRNA + (6S)-5,6,7,8-tetrahydrofolate + NAD(+). The catalysed reaction is uridine(54) in tRNA + (6R)-5,10-methylene-5,6,7,8-tetrahydrofolate + NADPH + H(+) = 5-methyluridine(54) in tRNA + (6S)-5,6,7,8-tetrahydrofolate + NADP(+). In terms of biological role, catalyzes the folate-dependent formation of 5-methyl-uridine at position 54 (M-5-U54) in all tRNAs. The sequence is that of Methylenetetrahydrofolate--tRNA-(uracil-5-)-methyltransferase TrmFO from Fusobacterium nucleatum subsp. nucleatum (strain ATCC 25586 / DSM 15643 / BCRC 10681 / CIP 101130 / JCM 8532 / KCTC 2640 / LMG 13131 / VPI 4355).